A 457-amino-acid chain; its full sequence is MDRISNLPDEIICHIGSFLSAREAAFTTVLSKRWHNLFTIVPDLHFDSSVKDGESLTDFVDRVMALPASSRVNKLSLKWWFDEDTDSAQFDEDTEPEDTEPAQFDQINRSLRVVLKRGVADFYLWVHGKQGYTLPFEVFTCETVTKLSLGSGFAIDFLPENALLPALKTLSLYHVRFYEFGRCAFKTLLASSPVLEELTVCGVNWELWKWSRTVSSSSLKRLTIMRKQWDAFDDSDFKSISFDTPSLAYLYYSDYVPKEYLSVNLDSLVETKLYLCPEENYMWGKGDEKRFNPINLLHGLKNVETLNLYTIMTAEMFYVFREALPVFQKLSHLSVNLSNFCWSSMPMLIKKAPNLKTLNIDGPLHYESYYRCAGDIFCECVSEYSFLVSCPLEVLKITEYYGSFRELMQMKHFLEKLSCLELVEVHSQATGERKLKLIADLERLPRASSKCKFEVVS.

Residues 1–49 form the F-box domain; it reads MDRISNLPDEIICHIGSFLSAREAAFTTVLSKRWHNLFTIVPDLHFDSS. 6 LRR repeats span residues 53–79, 147–174, 177–202, 229–254, 283–310, and 337–362; these read GESL…SLKW, LSLG…SLYH, FYEF…TVCG, WDAF…YYSD, WGKG…NLYT, and LSNF…NIDG.

This is F-box/LRR-repeat protein At3g62440 from Arabidopsis thaliana (Mouse-ear cress).